Here is a 225-residue protein sequence, read N- to C-terminus: Thymocyte nuclear protein 1 (225 aa).

Residues 1–47 form a disordered region; that stretch reads MSRPRKRLAGTSGSDKGLSGKRTKTENSGEALAKVEDSNPQKTSATK. The Nuclear localization signal motif lies at 5–10; it reads RKRLAG. The segment covering 23 to 39 has biased composition (basic and acidic residues); it reads TKTENSGEALAKVEDSN.

Phosphorylated.

The protein resides in the nucleus. Functionally, specifically binds 5-hydroxymethylcytosine (5hmC), suggesting that it acts as a specific reader of 5hmC. The chain is Thymocyte nuclear protein 1 (THYN1) from Homo sapiens (Human).